The chain runs to 670 residues: FAD-binding monooxygenase ausC (670 aa).

FAD is bound by residues Thr144–Trp147, Asp156–Thr157, and Tyr162. Met154–Asp156 is an NADP(+) binding site. NADP(+) contacts are provided by residues Thr299–Gln305 and Arg322–Thr323.

Belongs to the FAD-binding monooxygenase family. The cofactor is FAD.

The catalysed reaction is preaustinoid A + AH2 + O2 = preaustinoid A1 + A + H2O. The protein operates within secondary metabolite biosynthesis; terpenoid biosynthesis. Functionally, FAD-binding monooxygenase; part of the gene cluster that mediates the biosynthesis of calidodehydroaustin, a fungal meroterpenoid. The first step of the pathway is the synthesis of 3,5-dimethylorsellinic acid by the polyketide synthase ausA. 3,5-dimethylorsellinic acid is then prenylated by the polyprenyl transferase ausN. Further epoxidation by the FAD-dependent monooxygenase ausM and cyclization by the probable terpene cyclase ausL lead to the formation of protoaustinoid A. Protoaustinoid A is then oxidized to spiro-lactone preaustinoid A3 by the combined action of the FAD-binding monooxygenases ausB and ausC, and the dioxygenase ausE. Acid-catalyzed keto-rearrangement and ring contraction of the tetraketide portion of preaustinoid A3 by ausJ lead to the formation of preaustinoid A4. The aldo-keto reductase ausK, with the help of ausH, is involved in the next step by transforming preaustinoid A4 into isoaustinone which is in turn hydroxylated by the P450 monooxygenase ausI to form austinolide. The cytochrome P450 monooxygenase ausG modifies austinolide to austinol. Austinol is further acetylated to austin by the O-acetyltransferase ausP, which spontaneously changes to dehydroaustin. The cytochrome P450 monooxygenase ausR then converts dehydroaustin is into 7-dehydrodehydroaustin. The hydroxylation catalyzed by ausR permits the O-acetyltransferase ausQ to add an additional acetyl group to the molecule, leading to the formation of acetoxydehydroaustin. The short chain dehydrogenase ausT catalyzes the reduction of the double bond present between carbon atoms 1 and 2 to convert 7-dehydrodehydroaustin into 1,2-dihydro-7-hydroxydehydroaustin. AusQ catalyzes not only an acetylation reaction but also the addition of the PKS ausV diketide product to 1,2-dihydro-7-hydroxydehydroaustin, forming precalidodehydroaustin. Finally, the iron/alpha-ketoglutarate-dependent dioxygenase converts precalidodehydroaustin into calidodehydroaustin. The polypeptide is FAD-binding monooxygenase ausC (Aspergillus calidoustus).